The following is a 499-amino-acid chain: Putative sodium-dependent excitatory amino acid transporter glt-4 (499 aa).

Residues methionine 1–glutamate 7 lie on the Cytoplasmic side of the membrane. 3 helical membrane passes run asparagine 8–leucine 28, phenylalanine 50–leucine 70, and isoleucine 87–isoleucine 107. An N-linked (GlcNAc...) asparagine glycan is attached at asparagine 165. Helical transmembrane passes span valine 194–isoleucine 217, phenylalanine 227–isoleucine 254, and isoleucine 276–leucine 297. Positions isoleucine 303 to cysteine 333 form an intramembrane region, discontinuously helical. L-aspartate is bound at residue serine 320–serine 322. The helical transmembrane segment at valine 343–tyrosine 369 threads the bilayer. Na(+)-binding residues include glycine 351, threonine 353, and asparagine 355. Residues threonine 359, isoleucine 400–glycine 404, aspartate 433, and asparagine 440 each bind L-aspartate. Residues valine 383–glycine 416 constitute an intramembrane region (discontinuously helical). The helical transmembrane segment at phenylalanine 430 to isoleucine 451 threads the bilayer. Residues asparagine 440 and aspartate 444 each contribute to the Na(+) site.

This sequence belongs to the dicarboxylate/amino acid:cation symporter (DAACS) (TC 2.A.23) family.

The protein localises to the cell membrane. Functionally, sodium-dependent, high-affinity amino acid transporter that mediates the uptake of L-glutamate and also L-aspartate and D-aspartate. Functions as a symporter that transports one amino acid molecule together with two or three Na(+) ions and one proton, in parallel with the counter-transport of one K(+) ion. Mediates Cl(-) flux that is not coupled to amino acid transport; this avoids the accumulation of negative charges due to aspartate and Na(+) symport. The chain is Putative sodium-dependent excitatory amino acid transporter glt-4 (glt-4) from Caenorhabditis elegans.